Here is a 357-residue protein sequence, read N- to C-terminus: DNA integrity scanning protein DisA (357 aa).

The 139-residue stretch at 8–146 (VKSMINILQL…GNLRYTLKDI (139 aa)) folds into the DAC domain. ATP is bound by residues G75, L93, and 106 to 110 (MRHRT).

Belongs to the DisA family. In terms of assembly, homooctamer. Mg(2+) serves as cofactor.

It carries out the reaction 2 ATP = 3',3'-c-di-AMP + 2 diphosphate. Its function is as follows. Participates in a DNA-damage check-point that is active prior to asymmetric division when DNA is damaged. DisA forms globular foci that rapidly scan along the chromosomes during sporulation, searching for lesions. When a lesion is present, DisA pauses at the lesion site. This triggers a cellular response that culminates in a temporary block in sporulation initiation. In terms of biological role, also has diadenylate cyclase activity, catalyzing the condensation of 2 ATP molecules into cyclic di-AMP (c-di-AMP). c-di-AMP acts as a signaling molecule that couples DNA integrity with progression of sporulation. The rise in c-di-AMP level generated by DisA while scanning the chromosome, operates as a positive signal that advances sporulation; upon encountering a lesion, the DisA focus arrests at the damaged site and halts c-di-AMP synthesis. The protein is DNA integrity scanning protein DisA of Bacillus cereus (strain AH187).